We begin with the raw amino-acid sequence, 331 residues long: Glycerol-3-phosphate dehydrogenase [NAD(P)+] (331 aa).

Residues W11, R30, and K105 each contribute to the NADPH site. Sn-glycerol 3-phosphate contacts are provided by K105, G134, and S136. Residue A138 coordinates NADPH. Positions 189, 242, 252, 253, and 254 each coordinate sn-glycerol 3-phosphate. Residue K189 is the Proton acceptor of the active site. R253 lines the NADPH pocket. 2 residues coordinate NADPH: V277 and E279.

The protein belongs to the NAD-dependent glycerol-3-phosphate dehydrogenase family.

It is found in the cytoplasm. The enzyme catalyses sn-glycerol 3-phosphate + NAD(+) = dihydroxyacetone phosphate + NADH + H(+). The catalysed reaction is sn-glycerol 3-phosphate + NADP(+) = dihydroxyacetone phosphate + NADPH + H(+). It participates in membrane lipid metabolism; glycerophospholipid metabolism. Its function is as follows. Catalyzes the reduction of the glycolytic intermediate dihydroxyacetone phosphate (DHAP) to sn-glycerol 3-phosphate (G3P), the key precursor for phospholipid synthesis. This Herminiimonas arsenicoxydans protein is Glycerol-3-phosphate dehydrogenase [NAD(P)+].